We begin with the raw amino-acid sequence, 471 residues long: Ribulose bisphosphate carboxylase large chain (471 aa).

2 residues coordinate substrate: N119 and T169. Catalysis depends on K171, which acts as the Proton acceptor. K173 is a substrate binding site. K197, D199, and E200 together coordinate Mg(2+). N6-carboxylysine is present on K197. H290 acts as the Proton acceptor in catalysis. Residues R291, H323, and S375 each contribute to the substrate site.

Belongs to the RuBisCO large chain family. Type I subfamily. As to quaternary structure, heterohexadecamer of 8 large chains and 8 small chains; disulfide-linked. The disulfide link is formed within the large subunit homodimers. Mg(2+) serves as cofactor. In terms of processing, the disulfide bond which can form in the large chain dimeric partners within the hexadecamer appears to be associated with oxidative stress and protein turnover.

Its subcellular location is the carboxysome. It carries out the reaction 2 (2R)-3-phosphoglycerate + 2 H(+) = D-ribulose 1,5-bisphosphate + CO2 + H2O. The enzyme catalyses D-ribulose 1,5-bisphosphate + O2 = 2-phosphoglycolate + (2R)-3-phosphoglycerate + 2 H(+). Functionally, ruBisCO catalyzes two reactions: the carboxylation of D-ribulose 1,5-bisphosphate, the primary event in carbon dioxide fixation, as well as the oxidative fragmentation of the pentose substrate in the photorespiration process. Both reactions occur simultaneously and in competition at the same active site. In Microcystis aeruginosa (strain NIES-843 / IAM M-2473), this protein is Ribulose bisphosphate carboxylase large chain.